The chain runs to 362 residues: Outer envelope protein 39, chloroplastic (362 aa).

This sequence belongs to the OEP80 (TC 1.B.33.2) family. Expressed in germinating seeds. Expressed in the vasculature of roots, cotyledons and leaves.

It localises to the plastid. The protein localises to the chloroplast outer membrane. Functionally, beta-barrel pore-forming protein which possesses voltage-dependent channel activity. Required for proper plastid development. Involved in the maintenance of metabolic homeostasis of full-grown plants. The protein is Outer envelope protein 39, chloroplastic of Arabidopsis thaliana (Mouse-ear cress).